The sequence spans 537 residues: Di/tripeptide-binding protein 1 (537 aa).

The N-terminal stretch at 1 to 29 (MRRNAVIRSAIMPSLLGAALVAAVPQAFA) is a signal peptide.

Belongs to the bacterial solute-binding protein 5 family. As to quaternary structure, the complex is composed of two ATP-binding proteins (DppD and DppF), two transmembrane proteins (DppB and DppC) and a solute-binding protein (DppA1). Five orthologous SBPs (DppA1-A5) are present in P.aeruginosa, which increases the substrate specificity of the DppBCDF transporter.

Functionally, part of the ABC transporter DppABCDF involved in the uptake of various di/tripeptides. Prefers dipeptides with acidic residues at the C-terminal end. Involved in the uptake of phaseolotoxin, a toxic tripeptide inhibiting the enzyme ornithine carbamoyltransferase. The sequence is that of Di/tripeptide-binding protein 1 from Pseudomonas aeruginosa (strain UCBPP-PA14).